We begin with the raw amino-acid sequence, 697 residues long: Pentatricopeptide repeat-containing protein 1, mitochondrial (697 aa).

The N-terminal 36 residues, 1–36, are a transit peptide targeting the mitochondrion; the sequence is MLKRAHYVALHVTLNHNGLSYQRVFSCLTQFPMLRH. PPR repeat units follow at residues 257–288 and 294–328; these read RPFT…VKNK and SDVF…NVNF.

It localises to the mitochondrion. Functionally, mitochondrial RNA-binding protein required for the stability of the cox2 and cox3 mRNAs. In Schizosaccharomyces pombe (strain 972 / ATCC 24843) (Fission yeast), this protein is Pentatricopeptide repeat-containing protein 1, mitochondrial (ppr1).